The sequence spans 473 residues: 3-isopropylmalate dehydratase large subunit (473 aa).

Cysteine 354, cysteine 414, and cysteine 417 together coordinate [4Fe-4S] cluster.

Belongs to the aconitase/IPM isomerase family. LeuC type 1 subfamily. Heterodimer of LeuC and LeuD. [4Fe-4S] cluster serves as cofactor.

The enzyme catalyses (2R,3S)-3-isopropylmalate = (2S)-2-isopropylmalate. It functions in the pathway amino-acid biosynthesis; L-leucine biosynthesis; L-leucine from 3-methyl-2-oxobutanoate: step 2/4. Functionally, catalyzes the isomerization between 2-isopropylmalate and 3-isopropylmalate, via the formation of 2-isopropylmaleate. In Mycobacterium tuberculosis (strain CDC 1551 / Oshkosh), this protein is 3-isopropylmalate dehydratase large subunit.